Reading from the N-terminus, the 141-residue chain is HTH-type transcriptional repressor NsrR (141 aa).

The HTH rrf2-type domain occupies 2 to 129 (QLTSFTDYGL…DNYTLADLVE (128 aa)). The H-T-H motif DNA-binding region spans 28-51 (ISEVTDVYGVSRNHMVKIINQLSR). [2Fe-2S] cluster contacts are provided by Cys91, Cys96, and Cys102.

The cofactor is [2Fe-2S] cluster.

In terms of biological role, nitric oxide-sensitive repressor of genes involved in protecting the cell against nitrosative stress. May require iron for activity. This chain is HTH-type transcriptional repressor NsrR, found in Escherichia coli O157:H7 (strain EC4115 / EHEC).